Consider the following 109-residue polypeptide: Thiosulfate sulfurtransferase GlpE (109 aa).

The 89-residue stretch at 16-104 (RAEGAVVVDI…WRSTYPGETA (89 aa)) folds into the Rhodanese domain. Cys64 acts as the Cysteine persulfide intermediate in catalysis.

Belongs to the GlpE family.

Its subcellular location is the cytoplasm. The catalysed reaction is thiosulfate + hydrogen cyanide = thiocyanate + sulfite + 2 H(+). It catalyses the reaction thiosulfate + [thioredoxin]-dithiol = [thioredoxin]-disulfide + hydrogen sulfide + sulfite + 2 H(+). Its function is as follows. Transferase that catalyzes the transfer of sulfur from thiosulfate to thiophilic acceptors such as cyanide or dithiols. May function in a CysM-independent thiosulfate assimilation pathway by catalyzing the conversion of thiosulfate to sulfite, which can then be used for L-cysteine biosynthesis. In Pseudomonas entomophila (strain L48), this protein is Thiosulfate sulfurtransferase GlpE.